The sequence spans 510 residues: NAD(P)H-quinone oxidoreductase subunit 2 A, chloroplastic (510 aa).

12 helical membrane-spanning segments follow: residues 24–44 (LLLFNGSFIFPECILIFGLIL), 59–79 (WFYFISSTCLVISITALLFRW), 99–119 (IFQFLILLCSTLCIPLSVEYI), 124–144 (MAITEFLLFVLTATLGGMFLC), 149–169 (LITIFVAPECFSLCSYLLSGY), 183–203 (YLLMGGAGSSILVHGFSWLYG), 229–249 (ISLALISITVGLGFKLSPAPF), 295–315 (WHLLLEILAILSMILGNLLAI), 323–343 (MLAYSSIGQIGYVIIGIIVGD), 354–374 (YMLFYISMNLGTFACIVLFGL), 395–415 (ALSLALCLLSLGGLPPLAGFF), and 418–438 (LYLFWCGWQAGLYFLVSIGLL).

Belongs to the complex I subunit 2 family. As to quaternary structure, NDH is composed of at least 16 different subunits, 5 of which are encoded in the nucleus.

It is found in the plastid. It localises to the chloroplast thylakoid membrane. It carries out the reaction a plastoquinone + NADH + (n+1) H(+)(in) = a plastoquinol + NAD(+) + n H(+)(out). The enzyme catalyses a plastoquinone + NADPH + (n+1) H(+)(in) = a plastoquinol + NADP(+) + n H(+)(out). Functionally, NDH shuttles electrons from NAD(P)H:plastoquinone, via FMN and iron-sulfur (Fe-S) centers, to quinones in the photosynthetic chain and possibly in a chloroplast respiratory chain. The immediate electron acceptor for the enzyme in this species is believed to be plastoquinone. Couples the redox reaction to proton translocation, and thus conserves the redox energy in a proton gradient. This Triticum aestivum (Wheat) protein is NAD(P)H-quinone oxidoreductase subunit 2 A, chloroplastic.